Consider the following 199-residue polypeptide: 3-isopropylmalate dehydratase small subunit (199 aa).

It belongs to the LeuD family. LeuD type 1 subfamily. Heterodimer of LeuC and LeuD.

The enzyme catalyses (2R,3S)-3-isopropylmalate = (2S)-2-isopropylmalate. The protein operates within amino-acid biosynthesis; L-leucine biosynthesis; L-leucine from 3-methyl-2-oxobutanoate: step 2/4. Functionally, catalyzes the isomerization between 2-isopropylmalate and 3-isopropylmalate, via the formation of 2-isopropylmaleate. The protein is 3-isopropylmalate dehydratase small subunit of Mycobacteroides abscessus (strain ATCC 19977 / DSM 44196 / CCUG 20993 / CIP 104536 / JCM 13569 / NCTC 13031 / TMC 1543 / L948) (Mycobacterium abscessus).